We begin with the raw amino-acid sequence, 61 residues long: MNAKFILLLLVVTTTILLPDTQGAEVIKCRTPKDCADPCRKQTGCPHAKCMNKTCRCHRCG.

The first 23 residues, 1–23 (MNAKFILLLLVVTTTILLPDTQG), serve as a signal peptide directing secretion. 4 cysteine pairs are disulfide-bonded: Cys29–Cys50, Cys35–Cys55, Cys39–Cys57, and Cys45–Cys60. Residue Cys60 is modified to Cysteine amide.

The protein belongs to the short scorpion toxin superfamily. Potassium channel inhibitor family. Alpha-KTx 06 subfamily. Expressed by the venom gland.

It localises to the secreted. In terms of biological role, blocker of voltage-gated potassium channels. The protein is Potassium channel toxin alpha-KTx 6.8 of Opistophthalmus carinatus (African yellow leg scorpion).